Here is a 913-residue protein sequence, read N- to C-terminus: Zinc finger protein 112 (913 aa).

Residues 8–79 enclose the KRAB domain; the sequence is VTFKDVAVVF…ETETPRDGCS (72 aa). K256 participates in a covalent cross-link: Glycyl lysine isopeptide (Lys-Gly) (interchain with G-Cter in SUMO2). The C2H2-type 1; degenerate zinc-finger motif lies at 258–280; it reads YPCTGYRKAFSNDSSSEVHQQFH. The C2H2-type 2; degenerate zinc-finger motif lies at 443–465; sequence YNSEECGNGFSLASHFQDLQIVH. A C2H2-type 3; degenerate zinc finger spans residues 471-493; the sequence is YKRYVCSNSFSHNLYLQGHPKIH. The C2H2-type 4; degenerate zinc-finger motif lies at 497–519; sequence KPRKEHGNGFNWSSKLKDHQRVH. 13 C2H2-type zinc fingers span residues 525-547, 553-575, 581-603, 609-631, 637-659, 665-687, 693-715, 721-743, 749-771, 777-799, 805-827, 833-855, and 861-883; these read YKCN…QRVH, YKCE…QRVH, FKCE…QRVH, YQCD…QSVH, YICE…QRVH, YKCE…RRVH, YKCE…HRVH, and YKCD…QRVH. K890 participates in a covalent cross-link: Glycyl lysine isopeptide (Lys-Gly) (interchain with G-Cter in SUMO2).

This sequence belongs to the krueppel C2H2-type zinc-finger protein family.

Its subcellular location is the nucleus. May be involved in transcriptional regulation. This Homo sapiens (Human) protein is Zinc finger protein 112 (ZNF112).